We begin with the raw amino-acid sequence, 247 residues long: Carboxy-S-adenosyl-L-methionine synthase (247 aa).

Residues Tyr39, Gly64 to Ser66, Asp89 to Asn90, Asp117 to Ile118, Asn132, and Arg199 contribute to the S-adenosyl-L-methionine site.

The protein belongs to the class I-like SAM-binding methyltransferase superfamily. Cx-SAM synthase family. In terms of assembly, homodimer.

The enzyme catalyses prephenate + S-adenosyl-L-methionine = carboxy-S-adenosyl-L-methionine + 3-phenylpyruvate + H2O. Its function is as follows. Catalyzes the conversion of S-adenosyl-L-methionine (SAM) to carboxy-S-adenosyl-L-methionine (Cx-SAM). This is Carboxy-S-adenosyl-L-methionine synthase from Pectobacterium atrosepticum (strain SCRI 1043 / ATCC BAA-672) (Erwinia carotovora subsp. atroseptica).